Consider the following 453-residue polypeptide: MSQLNPKVGFVSLGCPKALVDSERILTQLRSEGYDIVPSYDSADVVVVNTCGFIDSAVTESLDAIGEAMNQNGKVIVTGCLGKRPEQIREAYPNVLAVSGPQDYQSVMEAVHEALPPKHDPFVDLVPDYGIKLTPRHYAYLKISEGCNHKCSFCIIPSMRGKLVSRPVDEVLREAERLVRGGVRELLVVSQDTSAYGVDVKYAEKMWRDKAYQTRLKALCEGLSELDAWVRMHYVYPYPHVDEVVPLMAENRILPYLDIPFQHASPRILRLMKRPGAVEKTLERVQNWRRIAPDITVRSTFIVGFPGETEAEFEELLSFLDEAQLDRVGAFAYSPVEGATANDLPDAVPEEVKQERLARFMEKQAQISAARLEAKIGTVQQCLVDAIEGDIAVARSKADAPEIDGLVHIQNADQVALRVGEFVDVEITESDDHDLYGDALPAAARPALDLKVL.

The 111-residue stretch at 6 to 116 (PKVGFVSLGC…VMEAVHEALP (111 aa)) folds into the MTTase N-terminal domain. Residues cysteine 15, cysteine 51, cysteine 80, cysteine 147, cysteine 151, and cysteine 154 each contribute to the [4Fe-4S] cluster site. The Radical SAM core domain maps to 133–370 (LTPRHYAYLK…MEKQAQISAA (238 aa)). One can recognise a TRAM domain in the interval 373–441 (EAKIGTVQQC…DHDLYGDALP (69 aa)).

It belongs to the methylthiotransferase family. RimO subfamily. [4Fe-4S] cluster serves as cofactor.

Its subcellular location is the cytoplasm. It catalyses the reaction L-aspartate(89)-[ribosomal protein uS12]-hydrogen + (sulfur carrier)-SH + AH2 + 2 S-adenosyl-L-methionine = 3-methylsulfanyl-L-aspartate(89)-[ribosomal protein uS12]-hydrogen + (sulfur carrier)-H + 5'-deoxyadenosine + L-methionine + A + S-adenosyl-L-homocysteine + 2 H(+). Functionally, catalyzes the methylthiolation of an aspartic acid residue of ribosomal protein uS12. The polypeptide is Ribosomal protein uS12 methylthiotransferase RimO (Stenotrophomonas maltophilia (strain R551-3)).